The primary structure comprises 431 residues: Serine hydroxymethyltransferase (431 aa).

A (6S)-5,6,7,8-tetrahydrofolate-binding site is contributed by 122 to 124 (GHI). Position 228 is an N6-(pyridoxal phosphate)lysine (Lys-228). Glu-245 lines the (6S)-5,6,7,8-tetrahydrofolate pocket.

The protein belongs to the SHMT family. As to quaternary structure, homodimer. Pyridoxal 5'-phosphate serves as cofactor.

Its subcellular location is the cytoplasm. The protein operates within amino-acid biosynthesis; glycine biosynthesis; glycine from L-serine: step 1/1. Its function is as follows. Catalyzes the reversible interconversion of serine and glycine with a modified folate serving as the one-carbon carrier. Also exhibits a pteridine-independent aldolase activity toward beta-hydroxyamino acids, producing glycine and aldehydes, via a retro-aldol mechanism. The chain is Serine hydroxymethyltransferase from Thermococcus kodakarensis (strain ATCC BAA-918 / JCM 12380 / KOD1) (Pyrococcus kodakaraensis (strain KOD1)).